The following is a 317-amino-acid chain: Lipopolysaccharide heptosyltransferase 1 (317 aa).

The ADP-L-glycero-beta-D-manno-heptose site is built by Thr-187, Thr-188, Lys-192, Glu-222, Met-242, Asp-261, Thr-262, Gly-263, and His-266.

It belongs to the glycosyltransferase 9 family.

It is found in the cell inner membrane. The enzyme catalyses an alpha-Kdo-(2-&gt;4)-alpha-Kdo-(2-&gt;6)-lipid A + ADP-L-glycero-beta-D-manno-heptose = an L-alpha-D-Hep-(1-&gt;5)-[alpha-Kdo-(2-&gt;4)]-alpha-Kdo-(2-&gt;6)-lipid A + ADP + H(+). The protein operates within bacterial outer membrane biogenesis; LPS core biosynthesis. Its function is as follows. Glycosyltransferase involved in the biosynthesis of the core oligosaccharide region of lipopolysaccharide (LPS). Catalyzes the addition of the first heptose unit to one 3-deoxy-D-manno-octulosonic acid (Kdo) residue of the Kdo2-lipid A module. The protein is Lipopolysaccharide heptosyltransferase 1 of Salmonella typhimurium (strain LT2 / SGSC1412 / ATCC 700720).